A 358-amino-acid polypeptide reads, in one-letter code: tRNA(Ile)-lysidine synthase (358 aa).

35–40 (SGGPDS) contacts ATP.

The protein belongs to the tRNA(Ile)-lysidine synthase family.

It is found in the cytoplasm. It carries out the reaction cytidine(34) in tRNA(Ile2) + L-lysine + ATP = lysidine(34) in tRNA(Ile2) + AMP + diphosphate + H(+). In terms of biological role, ligates lysine onto the cytidine present at position 34 of the AUA codon-specific tRNA(Ile) that contains the anticodon CAU, in an ATP-dependent manner. Cytidine is converted to lysidine, thus changing the amino acid specificity of the tRNA from methionine to isoleucine. This Bradyrhizobium sp. (strain BTAi1 / ATCC BAA-1182) protein is tRNA(Ile)-lysidine synthase.